The following is a 374-amino-acid chain: tRNA-specific 2-thiouridylase MnmA (374 aa).

ATP contacts are provided by residues 12 to 19 (GMSGGVDS) and Met38. An interaction with target base in tRNA region spans residues 98 to 100 (NPD). Cys103 acts as the Nucleophile in catalysis. Cys103 and Cys202 form a disulfide bridge. Gly128 lines the ATP pocket. Positions 152–154 (KDQ) are interaction with tRNA. Cys202 serves as the catalytic Cysteine persulfide intermediate. The segment at 316 to 317 (RY) is interaction with tRNA.

This sequence belongs to the MnmA/TRMU family.

The protein localises to the cytoplasm. It carries out the reaction S-sulfanyl-L-cysteinyl-[protein] + uridine(34) in tRNA + AH2 + ATP = 2-thiouridine(34) in tRNA + L-cysteinyl-[protein] + A + AMP + diphosphate + H(+). Its function is as follows. Catalyzes the 2-thiolation of uridine at the wobble position (U34) of tRNA, leading to the formation of s(2)U34. This Vibrio campbellii (strain ATCC BAA-1116) protein is tRNA-specific 2-thiouridylase MnmA.